The following is a 258-amino-acid chain: UPF0246 protein HI_0984 (258 aa).

This sequence belongs to the UPF0246 family.

This Haemophilus influenzae (strain ATCC 51907 / DSM 11121 / KW20 / Rd) protein is UPF0246 protein HI_0984.